The chain runs to 596 residues: Elongation factor 4 (596 aa).

One can recognise a tr-type G domain in the interval 2–184; it reads KQIRNFSIIA…VIVAKIPPPE (183 aa). GTP is bound by residues 14–19 and 131–134; these read DHGKST and NKID.

The protein belongs to the TRAFAC class translation factor GTPase superfamily. Classic translation factor GTPase family. LepA subfamily.

The protein resides in the cell inner membrane. It carries out the reaction GTP + H2O = GDP + phosphate + H(+). Functionally, required for accurate and efficient protein synthesis under certain stress conditions. May act as a fidelity factor of the translation reaction, by catalyzing a one-codon backward translocation of tRNAs on improperly translocated ribosomes. Back-translocation proceeds from a post-translocation (POST) complex to a pre-translocation (PRE) complex, thus giving elongation factor G a second chance to translocate the tRNAs correctly. Binds to ribosomes in a GTP-dependent manner. This is Elongation factor 4 from Shewanella baltica (strain OS223).